Here is a 570-residue protein sequence, read N- to C-terminus: Developmental and secondary metabolism regulator veA (570 aa).

Disordered regions lie at residues 1–24 (MATR…ISRE), 39–60 (ERAR…VDPP), 266–491 (DMYA…LGSG), and 504–541 (KRSH…DYGR). In terms of domain architecture, Velvet spans 25–231 (GKKITYKLSV…AEQGCRVRIR (207 aa)). The Nuclear localization signal motif lies at 39-44 (ERARAC). The segment covering 278–287 (STSISTTADT) has biased composition (polar residues). The segment covering 315-335 (SMPAASAAPAPAPVHSPATSA) has biased composition (low complexity). Composition is skewed to polar residues over residues 336 to 354 (QTSS…SQYP), 363 to 395 (QSAT…TSSG), and 427 to 445 (NMQT…YPTL). Residues 454 to 493 (PTPANHVTSLPPLKVLSGEYSHPSQPNAQSPHHDLGSGKR) are PEST. The segment covering 505 to 526 (RSHEETFGSDERPLHNGMRPDM) has biased composition (basic and acidic residues).

It belongs to the velvet family. VeA subfamily. As to quaternary structure, component of the heterotrimeric velvet complex composed of laeA, veA and velB; VeA acting as a bridging protein between laeA and velB.

It is found in the nucleus. The protein localises to the cytoplasm. Its function is as follows. Component of the velvet transcription factor complex that controls sexual/asexual developmental ratio in response to light, promoting sexual development in the darkness while stimulating asexual sporulation under illumination. The velvet complex hat acts as a global regulator for secondary metabolite gene expression. Controls the expression of hundreds of genes, including those comprising more than a dozen known secondary metabolite gene clusters. Controls the expression of the gliotoxin gene cluster. Controls the expression of the fumagillin, fumitremorgin G, fumigaclavine C and glionitrin gene clusters. The regulation of the fumagillin gene cluster and fumagillin production is performed through direct control of the expression of fumR. Negatively regulates conidiation. Required for normal protease activity. The polypeptide is Developmental and secondary metabolism regulator veA (Aspergillus fumigatus (strain ATCC MYA-4609 / CBS 101355 / FGSC A1100 / Af293) (Neosartorya fumigata)).